We begin with the raw amino-acid sequence, 399 residues long: Acetate kinase (399 aa).

Residue Asn9 participates in Mg(2+) binding. Lys16 contributes to the ATP binding site. Arg90 contacts substrate. Asp147 (proton donor/acceptor) is an active-site residue. Residues 207 to 211, 281 to 283, and 333 to 337 contribute to the ATP site; these read HLGNG, DFR, and GVGEN. A Mg(2+)-binding site is contributed by Glu387.

It belongs to the acetokinase family. As to quaternary structure, homodimer. The cofactor is Mg(2+). Requires Mn(2+) as cofactor.

Its subcellular location is the cytoplasm. The enzyme catalyses acetate + ATP = acetyl phosphate + ADP. Its pathway is metabolic intermediate biosynthesis; acetyl-CoA biosynthesis; acetyl-CoA from acetate: step 1/2. Its function is as follows. Catalyzes the formation of acetyl phosphate from acetate and ATP. Can also catalyze the reverse reaction. The sequence is that of Acetate kinase from Mycobacterium sp. (strain JLS).